The chain runs to 537 residues: ATP-dependent 6-phosphofructokinase 5, chloroplastic (537 aa).

Residues 1–52 constitute a chloroplast transit peptide; that stretch reads MDALSQAISSGISVPYKNNSSSLVPSHGLTSLILRKSRSPVNPSSRSRVSVR. A disordered region spans residues 35-64; the sequence is RKSRSPVNPSSRSRVSVRASEIQHSKTSAS. Positions 39–54 are enriched in low complexity; that stretch reads SPVNPSSRSRVSVRAS. Phosphoserine is present on serine 147. Residues glycine 189, 253 to 254, and 278 to 281 contribute to the ATP site; these read RG and GNGT. Asparagine 279 is a Mg(2+) binding site. Substrate-binding positions include 307 to 309, 352 to 354, glutamate 408, and 460 to 463; these read TID, MGR, and YMIR. Catalysis depends on aspartate 309, which acts as the Proton acceptor.

Belongs to the phosphofructokinase type A (PFKA) family. PPi-dependent PFK group II subfamily. Atypical ATP-dependent clade 'X' sub-subfamily. As to quaternary structure, homotetramer. The cofactor is Mg(2+). In terms of tissue distribution, expressed in roots, leaves, stems and flowers.

Its subcellular location is the plastid. The protein localises to the chloroplast. It catalyses the reaction beta-D-fructose 6-phosphate + ATP = beta-D-fructose 1,6-bisphosphate + ADP + H(+). It participates in carbohydrate degradation; glycolysis; D-glyceraldehyde 3-phosphate and glycerone phosphate from D-glucose: step 3/4. Its activity is regulated as follows. Allosterically activated by AMP. Its function is as follows. Catalyzes the phosphorylation of D-fructose 6-phosphate to fructose 1,6-bisphosphate by ATP, the first committing step of glycolysis. The polypeptide is ATP-dependent 6-phosphofructokinase 5, chloroplastic (Arabidopsis thaliana (Mouse-ear cress)).